The chain runs to 464 residues: Aspartyl protease 37 (464 aa).

Positions methionine 1–cysteine 19 are cleaved as a signal peptide. The N-linked (GlcNAc...) asparagine glycan is linked to asparagine 41. A Peptidase A1 domain is found at tyrosine 89–valine 456. Aspartate 107 is an active-site residue. Cysteine 117 and cysteine 123 form a disulfide bridge. N-linked (GlcNAc...) asparagine glycosylation is found at asparagine 174 and asparagine 261. Low complexity predominate over residues threonine 299–proline 311. The disordered stretch occupies residues threonine 299 to proline 319. The N-linked (GlcNAc...) asparagine glycan is linked to asparagine 320. Aspartate 337 is a catalytic residue. Residues cysteine 376 and cysteine 420 are joined by a disulfide bond.

This sequence belongs to the peptidase A1 family.

Functionally, anther-specific aspartic protease involved in tapetal programmed cell death (PCD). Directly regulated by the transcription factor EAT1/DTD in anthers during tapetum PCD and degeneration. In Oryza sativa subsp. japonica (Rice), this protein is Aspartyl protease 37.